Consider the following 620-residue polypeptide: Threonine--tRNA ligase (620 aa).

The segment at 1–141 (MKMLLIHSDY…LSRKIVAKEE (141 aa)) is editing domain. The interval 197-496 (PHVKFIKEKD…AEKGNAPMLP (300 aa)) is catalytic. Positions 289, 341, and 465 each coordinate Zn(2+).

It belongs to the class-II aminoacyl-tRNA synthetase family. In terms of assembly, homodimer. Requires Zn(2+) as cofactor.

Its subcellular location is the cytoplasm. It carries out the reaction tRNA(Thr) + L-threonine + ATP = L-threonyl-tRNA(Thr) + AMP + diphosphate + H(+). With respect to regulation, not inhibited by 1 uM borrelidin (BN); probably does not bind BN. Its function is as follows. Catalyzes the attachment of threonine to tRNA(Thr) in a two-step reaction: L-threonine is first activated by ATP to form Thr-AMP and then transferred to the acceptor end of tRNA(Thr). Also activates L-serine, but does not detectably transfer it to tRNA(Thr). Edits incorrectly charged L-seryl-tRNA(Thr) via its editing domain. Has no activity on correctly acylated L-seryl-tRNA(Ser) or L-threonyl-tRNA(Thr). Deacylates correctly charged glycyl-tRNA(Gly), but not glycyl-tRNA(Gly)(2'-dA76) (the terminal 2'-OH of tRNA adenine 76 has been dehydroxylated) nor the 2'-fluoro tRNA derivative, strongly suggesting the editing function is tRNA catalyzed. This is Threonine--tRNA ligase from Methanocaldococcus jannaschii (strain ATCC 43067 / DSM 2661 / JAL-1 / JCM 10045 / NBRC 100440) (Methanococcus jannaschii).